Consider the following 248-residue polypeptide: Ribonuclease HII (248 aa).

Residues 29 to 219 form the RNase H type-2 domain; it reads DIVCGVDEAG…VREAHLRLGT (191 aa). 3 residues coordinate a divalent metal cation: D35, E36, and D128.

This sequence belongs to the RNase HII family. Mn(2+) is required as a cofactor. It depends on Mg(2+) as a cofactor.

The protein localises to the cytoplasm. The catalysed reaction is Endonucleolytic cleavage to 5'-phosphomonoester.. Endonuclease that specifically degrades the RNA of RNA-DNA hybrids. This Paraburkholderia xenovorans (strain LB400) protein is Ribonuclease HII.